A 548-amino-acid chain; its full sequence is Tryprostatin B 6-hydroxylase (548 aa).

3 helical membrane passes run 5–25 (MKCG…LWYF), 35–54 (WRYV…LLYA), and 73–93 (LLMV…RTLF). Residue C491 participates in heme binding.

The protein belongs to the cytochrome P450 family. It depends on heme as a cofactor.

It is found in the membrane. It catalyses the reaction tryprostatin B + reduced [NADPH--hemoprotein reductase] + O2 = 6-hydroxytryprostatin B + oxidized [NADPH--hemoprotein reductase] + H2O + H(+). The protein operates within mycotoxin biosynthesis. Functionally, cytochrome P450 monooxygenase; part of the gene cluster that mediates the biosynthesis of fumitremorgins, indole alkaloids that carry not only intriguing chemical structures, but also interesting biological and pharmacological activities. The biosynthesis of fumitremorgin-type alkaloids begins by condensation of the two amino acids L-tryptophan and L-proline to brevianamide F, catalyzed by the non-ribosomal peptide synthetase ftmPS/ftmA. Brevianamide F is then prenylated by the prenyltransferase ftmPT1/ftmB in the presence of dimethylallyl diphosphate, resulting in the formation of tryprostatin B. The three cytochrome P450 monooxygenases, ftmP450-1/ftmC, ftmP450-2/ftmE and ftmP450-3/FtmG, are responsible for the conversion of tryprostatin B to 6-hydroxytryprostatin B, tryprostatin A to fumitremorgin C and fumitremorgin C to 12,13-dihydroxyfumitremorgin C, respectively. The putative methyltransferase ftmMT/ftmD is expected for the conversion of 6-hydroxytryprostatin B to tryprostatin A. FtmPT2/FtmH catalyzes the prenylation of 12,13-dihydroxyfumitre-morgin C in the presence of dimethylallyl diphosphate, resulting in the formation of fumitremorgin B. Fumitremorgin B is further converted to verruculogen by ftmOx1/ftmF via the insertion of an endoperoxide bond between the two prenyl moieties. Finally, verruculogen is further converted to fumitremorgin A by the verruculogen prenyltransferase ftmPT3. The sequence is that of Tryprostatin B 6-hydroxylase from Neosartorya fischeri (strain ATCC 1020 / DSM 3700 / CBS 544.65 / FGSC A1164 / JCM 1740 / NRRL 181 / WB 181) (Aspergillus fischerianus).